We begin with the raw amino-acid sequence, 162 residues long: 2-C-methyl-D-erythritol 2,4-cyclodiphosphate synthase (162 aa).

A divalent metal cation is bound by residues Asp10 and His12. Residues 10–12 (DVH) and 36–37 (HS) each bind 4-CDP-2-C-methyl-D-erythritol 2-phosphate. His44 serves as a coordination point for a divalent metal cation. Residues 58–60 (DIG), 63–67 (FPDTD), 102–108 (AQAPKMA), 134–137 (TTTE), Phe141, and Arg144 contribute to the 4-CDP-2-C-methyl-D-erythritol 2-phosphate site.

It belongs to the IspF family. Homotrimer. A divalent metal cation is required as a cofactor.

The catalysed reaction is 4-CDP-2-C-methyl-D-erythritol 2-phosphate = 2-C-methyl-D-erythritol 2,4-cyclic diphosphate + CMP. The protein operates within isoprenoid biosynthesis; isopentenyl diphosphate biosynthesis via DXP pathway; isopentenyl diphosphate from 1-deoxy-D-xylulose 5-phosphate: step 4/6. Functionally, involved in the biosynthesis of isopentenyl diphosphate (IPP) and dimethylallyl diphosphate (DMAPP), two major building blocks of isoprenoid compounds. Catalyzes the conversion of 4-diphosphocytidyl-2-C-methyl-D-erythritol 2-phosphate (CDP-ME2P) to 2-C-methyl-D-erythritol 2,4-cyclodiphosphate (ME-CPP) with a corresponding release of cytidine 5-monophosphate (CMP). This chain is 2-C-methyl-D-erythritol 2,4-cyclodiphosphate synthase, found in Pseudoalteromonas atlantica (strain T6c / ATCC BAA-1087).